The chain runs to 475 residues: Sulfate adenylyltransferase subunit 1 (475 aa).

The tr-type G domain occupies 25–239 (KSLLRFLTCG…EVLETVEIQR (215 aa)). Residues 34 to 41 (GSVDDGKS) form a G1 region. 34–41 (GSVDDGKS) contributes to the GTP binding site. Residues 92 to 96 (GITID) are G2. A G3 region spans residues 113–116 (DTPG). Residues 113–117 (DTPGH) and 168–171 (NKMD) each bind GTP. Residues 168–171 (NKMD) form a G4 region. The segment at 206-208 (SAL) is G5.

The protein belongs to the TRAFAC class translation factor GTPase superfamily. Classic translation factor GTPase family. CysN/NodQ subfamily. As to quaternary structure, heterodimer composed of CysD, the smaller subunit, and CysN.

The catalysed reaction is sulfate + ATP + H(+) = adenosine 5'-phosphosulfate + diphosphate. It participates in sulfur metabolism; hydrogen sulfide biosynthesis; sulfite from sulfate: step 1/3. In terms of biological role, with CysD forms the ATP sulfurylase (ATPS) that catalyzes the adenylation of sulfate producing adenosine 5'-phosphosulfate (APS) and diphosphate, the first enzymatic step in sulfur assimilation pathway. APS synthesis involves the formation of a high-energy phosphoric-sulfuric acid anhydride bond driven by GTP hydrolysis by CysN coupled to ATP hydrolysis by CysD. This is Sulfate adenylyltransferase subunit 1 from Escherichia fergusonii (strain ATCC 35469 / DSM 13698 / CCUG 18766 / IAM 14443 / JCM 21226 / LMG 7866 / NBRC 102419 / NCTC 12128 / CDC 0568-73).